Consider the following 236-residue polypeptide: Pyridoxal 5'-phosphate synthase subunit PdxT (236 aa).

An L-glutamine-binding site is contributed by 61–63; that stretch reads GES. The active-site Nucleophile is cysteine 93. L-glutamine contacts are provided by residues arginine 127 and 163–164; that span reads IR. Residues histidine 215 and glutamate 217 each act as charge relay system in the active site.

This sequence belongs to the glutaminase PdxT/SNO family. In terms of assembly, in the presence of PdxS, forms a dodecamer of heterodimers. Only shows activity in the heterodimer.

The catalysed reaction is aldehydo-D-ribose 5-phosphate + D-glyceraldehyde 3-phosphate + L-glutamine = pyridoxal 5'-phosphate + L-glutamate + phosphate + 3 H2O + H(+). It catalyses the reaction L-glutamine + H2O = L-glutamate + NH4(+). The protein operates within cofactor biosynthesis; pyridoxal 5'-phosphate biosynthesis. Catalyzes the hydrolysis of glutamine to glutamate and ammonia as part of the biosynthesis of pyridoxal 5'-phosphate. The resulting ammonia molecule is channeled to the active site of PdxS. The polypeptide is Pyridoxal 5'-phosphate synthase subunit PdxT (Arthrobacter sp. (strain FB24)).